We begin with the raw amino-acid sequence, 203 residues long: N-(5'-phosphoribosyl)anthranilate isomerase (203 aa).

The protein belongs to the TrpF family.

The enzyme catalyses N-(5-phospho-beta-D-ribosyl)anthranilate = 1-(2-carboxyphenylamino)-1-deoxy-D-ribulose 5-phosphate. The protein operates within amino-acid biosynthesis; L-tryptophan biosynthesis; L-tryptophan from chorismate: step 3/5. The sequence is that of N-(5'-phosphoribosyl)anthranilate isomerase from Listeria innocua serovar 6a (strain ATCC BAA-680 / CLIP 11262).